The chain runs to 218 residues: Small ribosomal subunit protein uS3c (218 aa).

Positions 47 to 118 (VQKQIKNSSN…KIQITLKNVL (72 aa)) constitute a KH type-2 domain.

It belongs to the universal ribosomal protein uS3 family. Part of the 30S ribosomal subunit.

The protein resides in the plastid. Its subcellular location is the chloroplast. This chain is Small ribosomal subunit protein uS3c (rps3), found in Angiopteris evecta (Mule's foot fern).